Consider the following 143-residue polypeptide: Large-conductance mechanosensitive channel (143 aa).

2 helical membrane-spanning segments follow: residues 10–30 and 89–109; these read FAVK…GAFS and GSFI…FLMV.

It belongs to the MscL family. As to quaternary structure, homopentamer.

It is found in the cell inner membrane. In terms of biological role, channel that opens in response to stretch forces in the membrane lipid bilayer. May participate in the regulation of osmotic pressure changes within the cell. The protein is Large-conductance mechanosensitive channel of Burkholderia pseudomallei (strain 668).